We begin with the raw amino-acid sequence, 305 residues long: Oxygen-dependent coproporphyrinogen-III oxidase (305 aa).

Position 98 (S98) interacts with substrate. A divalent metal cation-binding residues include H102 and H112. H112 serves as the catalytic Proton donor. Substrate is bound at residue 114 to 116; that stretch reads NVR. Residues H151 and H181 each coordinate a divalent metal cation. Residues 246-281 are important for dimerization; sequence YVEFNLVYDRGTLFGLQSGGRTESILMSMPPLARWE. 264–266 contacts substrate; the sequence is GGR.

This sequence belongs to the aerobic coproporphyrinogen-III oxidase family. In terms of assembly, homodimer. Requires a divalent metal cation as cofactor.

It localises to the cytoplasm. It carries out the reaction coproporphyrinogen III + O2 + 2 H(+) = protoporphyrinogen IX + 2 CO2 + 2 H2O. Its pathway is porphyrin-containing compound metabolism; protoporphyrin-IX biosynthesis; protoporphyrinogen-IX from coproporphyrinogen-III (O2 route): step 1/1. In terms of biological role, involved in the heme biosynthesis. Catalyzes the aerobic oxidative decarboxylation of propionate groups of rings A and B of coproporphyrinogen-III to yield the vinyl groups in protoporphyrinogen-IX. This is Oxygen-dependent coproporphyrinogen-III oxidase from Vibrio atlanticus (strain LGP32) (Vibrio splendidus (strain Mel32)).